A 136-amino-acid polypeptide reads, in one-letter code: Endonuclease II (136 aa).

The 100-residue stretch at 32–131 (KYNVIYAIAI…IKLFNPPWNI (100 aa)) folds into the GIY-YIG domain.

Homotetramer. Mg(2+) serves as cofactor.

The catalysed reaction is Endonucleolytic nicking and cleavage of cytosine-containing double-stranded DNA.. Its function is as follows. Contributes to the degradation of host DNA, permitting the scavenging of host-derived nucleotides for phage DNA synthesis. Sequence-specific endonuclease. Catalyzes nicking of the bottom strand of double-stranded DNA between the first and second base pair to the right of a top-strand CCGC motif. Does not cleave native phage DNA, which contains 5-hydroxymethylcytosine instead of cytosine. This chain is Endonuclease II (denA), found in Escherichia coli (Bacteriophage T4).